The primary structure comprises 160 residues: AP-1 complex subunit sigma-2 (160 aa).

This sequence belongs to the adaptor complexes small subunit family. Adaptor protein complex 1 (AP-1) is a heterotetramer composed of two large adaptins (gamma-type subunit AP1G1 and beta-type subunit AP1B1), a medium adaptin (mu-type subunit AP1M1 or AP1M2) and a small adaptin (sigma-type subunit AP1S1 or AP1S2 or AP1S3). Binds to MUC1. As to expression, widely expressed.

The protein resides in the golgi apparatus. It localises to the cytoplasmic vesicle membrane. The protein localises to the membrane. It is found in the clathrin-coated pit. Its function is as follows. Subunit of clathrin-associated adaptor protein complex 1 that plays a role in protein sorting in the late-Golgi/trans-Golgi network (TGN) and/or endosomes. The AP complexes mediate both the recruitment of clathrin to membranes and the recognition of sorting signals within the cytosolic tails of transmembrane cargo molecules. The polypeptide is AP-1 complex subunit sigma-2 (Ap1s2) (Mus musculus (Mouse)).